The following is a 479-amino-acid chain: Glutamate--tRNA ligase (479 aa).

The 'HIGH' region signature appears at 9-19; the sequence is PSPTGLFHIGT. The short motif at 248–252 is the 'KMSKS' region element; sequence KLSKR. Lys251 is an ATP binding site.

This sequence belongs to the class-I aminoacyl-tRNA synthetase family. Glutamate--tRNA ligase type 1 subfamily. Monomer.

The protein resides in the cytoplasm. The enzyme catalyses tRNA(Glu) + L-glutamate + ATP = L-glutamyl-tRNA(Glu) + AMP + diphosphate. Functionally, catalyzes the attachment of glutamate to tRNA(Glu) in a two-step reaction: glutamate is first activated by ATP to form Glu-AMP and then transferred to the acceptor end of tRNA(Glu). This chain is Glutamate--tRNA ligase, found in Prochlorococcus marinus (strain MIT 9312).